A 653-amino-acid chain; its full sequence is ATP-dependent rRNA helicase SPB4 (653 aa).

Positions 17–45 (WQALTPPLSEWILDAVAAMGFTRMTPVQA) match the Q motif motif. The 210-residue stretch at 48-257 (IPLFMGHKDV…RVGLRNPVKI (210 aa)) folds into the Helicase ATP-binding domain. Position 61 to 68 (61 to 68 (AVTGSGKT)) interacts with ATP. The DEAD box motif lies at 205-208 (DEAD). The Helicase C-terminal domain maps to 291 to 444 (AIRQILNSID…SPPVALSDTL (154 aa)). The tract at residues 534 to 653 (KQREKHRQES…DGESEFEGFD (120 aa)) is disordered. Over residues 558–569 (PSSSSNNDTAPW) the composition is skewed to polar residues. Residues 571–627 (KTLEKKSDKEKRRERKRAKKEREHWEKMTEEEKTKSRETHQMLEELRKKNRQELNAK) are a coiled coil. 2 stretches are compositionally biased toward basic and acidic residues: residues 572-581 (TLEKKSDKEK) and 590-626 (KEREHWEKMTEEEKTKSRETHQMLEELRKKNRQELNA). Residues 627–636 (KSHTSSSVLS) show a composition bias toward polar residues. Positions 641–653 (AELDGESEFEGFD) are enriched in acidic residues.

The protein belongs to the DEAD box helicase family. DDX55/SPB4 subfamily. Component of pre-60S ribosomal complexes.

The protein localises to the nucleus. The protein resides in the nucleolus. The enzyme catalyses ATP + H2O = ADP + phosphate + H(+). In terms of biological role, ATP-binding RNA helicase involved in the biogenesis of 60S ribosomal subunits. Binds 90S pre-ribosomal particles and dissociates from pre-60S ribosomal particles after processing of 27SB pre-rRNA. Required for the normal formation of 18S rRNA through the processing of pre-rRNAs at sites A0, A1 and A2, and the normal formation of 25S and 5.8S rRNAs through the processing of pre-rRNAs at sites C1 and C2. The chain is ATP-dependent rRNA helicase SPB4 from Coccidioides immitis (strain RS) (Valley fever fungus).